The sequence spans 891 residues: Nitrate reductase [NAD(P)H] (891 aa).

A disordered region spans residues 1-78; it reads MAASVEYNRQ…VKDPRDEATS (78 aa). Residues 63 to 76 are compositionally biased toward basic and acidic residues; sequence LDVEPSVKDPRDEA. A Mo-molybdopterin-binding site is contributed by Cys168. The 76-residue stretch at 515-590 folds into the Cytochrome b5 heme-binding domain; that stretch reads SAQFTMSEVR…LEMYRVGELI (76 aa). Positions 550 and 573 each coordinate heme. The FAD-binding FR-type domain occupies 630–742; sequence REKVRCRLVD…KGPVGHIEYA (113 aa). FAD is bound by residues 682-685, 699-703, Phe704, Phe711, 716-718, and Thr769; these read RAYT, LIKIY, and LMS.

The protein belongs to the nitrate reductase family. In terms of assembly, homodimer. FAD is required as a cofactor. Heme serves as cofactor. Requires Mo-molybdopterin as cofactor.

The catalysed reaction is nitrite + NAD(+) + H2O = nitrate + NADH + H(+). The enzyme catalyses nitrite + NADP(+) + H2O = nitrate + NADPH + H(+). Nitrate reductase is a key enzyme involved in the first step of nitrate assimilation in plants, fungi and bacteria. In Hordeum vulgare (Barley), this protein is Nitrate reductase [NAD(P)H] (NAR-7).